The primary structure comprises 299 residues: Taste receptor type 2 member 50 (299 aa).

Residue methionine 1 is a topological domain, extracellular. The chain crosses the membrane as a helical span at residues 2–22; it reads VTFLHIFFSILILVLFVLGNF. Topologically, residues 23–55 are cytoplasmic; it reads ANGFIALVNFIDLVKRKKISSADQILTALAVSR. A helical membrane pass occupies residues 56 to 76; that stretch reads IGLLWALLLNWYLTVLNPAFY. Topologically, residues 77-87 are extracellular; sequence SVELRITSYNA. A helical transmembrane segment spans residues 88–108; sequence WVVTNHFSMWLAASLSIFYLL. The Cytoplasmic portion of the chain corresponds to 109–126; the sequence is KIANFSNLIFLHLKRRVR. Residues 127 to 147 traverse the membrane as a helical segment; sequence SVILVILLGPLTFLVCHLFVA. The Extracellular segment spans residues 148 to 181; sequence NMDESMSAEEYEGNMTGKLKLRNTVHLSYLTVTT. An N-linked (GlcNAc...) asparagine glycan is attached at asparagine 161. Residues 182–202 traverse the membrane as a helical segment; sequence LWSFIPFTLSLISFLMLICSL. Residues 203–229 are Cytoplasmic-facing; it reads CKHVKKMQLHGEGSQDLSTKVHIKALQ. A helical membrane pass occupies residues 230–250; that stretch reads TLISFLLLCAIFFLFLIISIW. Over 251–259 the chain is Extracellular; the sequence is NPRRLQNDP. Residues 260–280 traverse the membrane as a helical segment; sequence VVVVSKAVGNIYLALDSFILI. Residues 281 to 299 are Cytoplasmic-facing; sequence WRTKKLKHTFLLILCQIRC.

The protein belongs to the G-protein coupled receptor T2R family.

The protein resides in the membrane. Receptor that may play a role in the perception of bitterness and is gustducin-linked. May play a role in sensing the chemical composition of the gastrointestinal content. The activity of this receptor may stimulate alpha gustducin, mediate PLC-beta-2 activation and lead to the gating of TRPM5. The protein is Taste receptor type 2 member 50 (TAS2R50) of Pongo pygmaeus (Bornean orangutan).